Reading from the N-terminus, the 100-residue chain is Class II hydrophobin CU (100 aa).

The signal sequence occupies residues 1–25 (MQFSIATIALFLSSAMAAPYSGNSN). 4 cysteine pairs are disulfide-bonded: C32–C82, C42–C72, C43–C55, and C83–C94.

The protein belongs to the cerato-ulmin hydrophobin family. Homotetramer. Further self-assembles to form highly ordered films at water-air interfaces through intermolecular interactions.

The protein localises to the secreted. The protein resides in the cell wall. In terms of biological role, aerial growth, conidiation, and dispersal of filamentous fungi in the environment rely upon a capability of their secreting small amphipathic proteins called hydrophobins (HPBs) with low sequence identity. Class I can self-assemble into an outermost layer of rodlet bundles on aerial cell surfaces, conferring cellular hydrophobicity that supports fungal growth, development and dispersal; whereas Class II form highly ordered films at water-air interfaces through intermolecular interactions but contribute nothing to the rodlet structure. CU is a class II hydrophobin that is implicated in the pathogenicity of this fungus on elm trees. Required for hydrophobicity and adherence of the cells and acts as a parasitic fitness factor by protecting infectious propagules from desiccation. Reduces the interfacial tension of both oil-water and air-water interfaces. The chain is Class II hydrophobin CU from Ophiostoma ulmi (Dutch elm disease fungus).